The chain runs to 336 residues: GTPase Obg (336 aa).

In terms of domain architecture, Obg spans 1-159 (MKFLDQAKIY…RWVWLRLKLI (159 aa)). The region spanning 160–328 (ADIGLVGLPN…LLRLLQDRVT (169 aa)) is the OBG-type G domain. GTP-binding positions include 166–173 (GLPNAGKS), 191–195 (FTTLH), 213–216 (DIPG), 280–283 (NKCD), and 309–311 (SGA). Residues Ser-173 and Thr-193 each contribute to the Mg(2+) site.

Belongs to the TRAFAC class OBG-HflX-like GTPase superfamily. OBG GTPase family. Monomer. Mg(2+) serves as cofactor.

It localises to the cytoplasm. In terms of biological role, an essential GTPase which binds GTP, GDP and possibly (p)ppGpp with moderate affinity, with high nucleotide exchange rates and a fairly low GTP hydrolysis rate. Plays a role in control of the cell cycle, stress response, ribosome biogenesis and in those bacteria that undergo differentiation, in morphogenesis control. This is GTPase Obg from Gluconobacter oxydans (strain 621H) (Gluconobacter suboxydans).